The following is a 998-amino-acid chain: Collagen alpha-1(I) chain (998 aa).

The interval 1 to 998 (GGVSVPGPMG…PGPPGPPGPP (998 aa)) is disordered. A 4-hydroxyproline mark is found at Pro-18, Pro-21, Pro-24, Pro-33, Pro-48, Pro-63, Pro-69, Pro-78, and Pro-84. Residues 26-39 (PQGFQGPPGSSGPM) show a composition bias toward low complexity. Residues 51 to 65 (NGDDGEAGKPGRPGE) are compositionally biased toward basic and acidic residues. Lys-87 bears the 5-hydroxylysine; alternate mark. An O-linked (Gal...) hydroxylysine; alternate glycan is attached at Lys-87. Ser-93 carries the post-translational modification Phosphoserine. A compositionally biased stretch (low complexity) spans 101–115 (DAGPAGPKQMGPRGL). 4-hydroxyproline occurs at positions 116, 122, 143, 152, 155, 182, 185, 197, 203, 212, 218, 221, and 236. The span at 122–140 (PGASGPAGARGNDGATGAA) shows a compositional bias: low complexity. A compositionally biased stretch (pro residues) spans 142 to 154 (PPGPTGPAGPPGF). Low complexity predominate over residues 188–238 (AGAAGPAGNPGADGQPGAKGANGAPGIAGAPGFPGARGPSGPQGPSGAPGP). The residue at position 239 (Lys-239) is a 5-hydroxylysine. A 4-hydroxyproline mark is found at Pro-245, Pro-248, Pro-260, Pro-269, Pro-284, Pro-290, Pro-299, and Pro-305. Positions 294 to 303 (GERGGPGSRG) are enriched in gly residues. Lys-314 is modified (5-hydroxylysine). Pro-323, Pro-332, Pro-338, Pro-344, Pro-353, Pro-356, Pro-365, Pro-374, Pro-380, Pro-392, Pro-401, Pro-410, Pro-413, Pro-431, Pro-449, Pro-455, Pro-461, Pro-467, Pro-473, Pro-479, Pro-491, Pro-500, Pro-511, Pro-523, Pro-526, Pro-532, Pro-538, and Pro-547 each carry 4-hydroxyproline. Over residues 347–401 (KGLTGSPGSPGPDGKTGPPGPAGQDGRPGPAGPPGARGQAGVMGFPGPKGAAGEP) the composition is skewed to low complexity. The span at 443 to 470 (QGPAGSPGFQGLPGPAGPPGEAGKPGEQ) shows a compositional bias: low complexity. A compositionally biased stretch (low complexity) spans 513 to 535 (NDGAKGDAGAPGAPGSQGAPGLQ). At Lys-559 the chain carries 5-hydroxylysine. 4-hydroxyproline occurs at positions 565 and 580. Residues 592–606 (TGPSGPAGPTGARGA) are compositionally biased toward low complexity. Ser-595 bears the Phosphoserine mark. 4-hydroxyproline is present on residues Pro-607, Pro-613, Pro-616, Pro-625, Pro-631, Pro-649, Pro-658, and Pro-667. Residues 619–646 (AGFAGPPGADGQPGAKGEPGDAGAKGDA) show a composition bias toward low complexity. Residues 648 to 660 (PPGPAGPTGPPGP) are compositionally biased toward pro residues. Lys-670 is modified (5-hydroxylysine). Positions 675 to 691 (SAGPPGATGFPGAAGRV) are enriched in low complexity. 4-hydroxyproline is present on residues Pro-679 and Pro-685. Pro-693 bears the 3-hydroxyproline mark. A 4-hydroxyproline mark is found at Pro-694, Pro-703, Pro-706, Pro-727, Pro-736, Pro-744, Pro-753, Pro-771, Pro-780, Pro-783, Pro-789, Pro-804, Pro-810, Pro-816, Pro-825, and Pro-831. Low complexity predominate over residues 720–729 (ETGPAGRPGE). Low complexity predominate over residues 741–762 (KGSPGADGPAGAPGTPGPQGIA). Over residues 803–813 (PPGPMGPPGLA) the composition is skewed to pro residues. Residues 815–830 (PPGEAGREGSPGAEGS) show a composition bias toward low complexity. Lys-840 bears the 5-hydroxylysine mark. Over residues 848–863 (PGPPGAPGAPGAPGPV) the composition is skewed to pro residues. 3 positions are modified to 4-hydroxyproline: Pro-851, Pro-854, and Pro-857. A compositionally biased stretch (low complexity) spans 884 to 898 (AGPAGARGPAGPQGP). The span at 899–913 (RGDKGETGEQGDRGI) shows a compositional bias: basic and acidic residues. Lys-902 is subject to 5-hydroxylysine. Lys-914 is subject to 5-hydroxylysine; alternate. Lys-914 carries an O-linked (Gal...) hydroxylysine; alternate glycan. Pro-929, Pro-932, Pro-950, and Pro-965 each carry 4-hydroxyproline. Low complexity predominate over residues 932 to 965 (PGEQGPSGASGPAGPRGPPGSAGTPGKDGLNGLP). Pro-970 is subject to 3-hydroxyproline. Pro-971 is modified (4-hydroxyproline). Positions 983 to 998 (VGPPGPPGPPGPPGPP) are enriched in pro residues. 3-hydroxyproline is present on Pro-985. A 4-hydroxyproline modification is found at Pro-986. Pro-988 carries the 3-hydroxyproline modification. At Pro-989 the chain carries 4-hydroxyproline. Residue Pro-991 is modified to 3-hydroxyproline. A 4-hydroxyproline mark is found at Pro-992, Pro-995, and Pro-998.

The protein belongs to the fibrillar collagen family. As to quaternary structure, trimers of one alpha 2(I) and two alpha 1(I) chains. Contains mostly 4-hydroxyproline. Proline residues at the third position of the tripeptide repeating unit (G-X-Y) are hydroxylated in some or all of the chains. Post-translationally, contains 3-hydroxyproline at a few sites. This modification occurs on the first proline residue in the sequence motif Gly-Pro-Hyp, where Hyp is 4-hydroxyproline. In terms of processing, lysine residues at the third position of the tripeptide repeating unit (G-X-Y) are 5-hydroxylated in some or all of the chains. O-glycosylated on hydroxylated lysine residues. The O-linked glycan consists of a Glc-Gal disaccharide. Expressed in bones.

It is found in the secreted. It localises to the extracellular space. The protein localises to the extracellular matrix. Type I collagen is a member of group I collagen (fibrillar forming collagen). This chain is Collagen alpha-1(I) chain, found in Glyptodon sp. (strain SLP-2019) (Giant armadillo).